The sequence spans 556 residues: 2-succinyl-5-enolpyruvyl-6-hydroxy-3-cyclohexene-1-carboxylate synthase (556 aa).

The protein belongs to the TPP enzyme family. MenD subfamily. As to quaternary structure, homodimer. Mg(2+) is required as a cofactor. It depends on Mn(2+) as a cofactor. Thiamine diphosphate serves as cofactor.

The enzyme catalyses isochorismate + 2-oxoglutarate + H(+) = 5-enolpyruvoyl-6-hydroxy-2-succinyl-cyclohex-3-ene-1-carboxylate + CO2. It functions in the pathway quinol/quinone metabolism; 1,4-dihydroxy-2-naphthoate biosynthesis; 1,4-dihydroxy-2-naphthoate from chorismate: step 2/7. It participates in quinol/quinone metabolism; menaquinone biosynthesis. In terms of biological role, catalyzes the thiamine diphosphate-dependent decarboxylation of 2-oxoglutarate and the subsequent addition of the resulting succinic semialdehyde-thiamine pyrophosphate anion to isochorismate to yield 2-succinyl-5-enolpyruvyl-6-hydroxy-3-cyclohexene-1-carboxylate (SEPHCHC). The sequence is that of 2-succinyl-5-enolpyruvyl-6-hydroxy-3-cyclohexene-1-carboxylate synthase from Salmonella agona (strain SL483).